The primary structure comprises 130 residues: Small ribosomal subunit protein uS8 (130 aa).

This sequence belongs to the universal ribosomal protein uS8 family. As to quaternary structure, component of the 40S ribosomal subunit. Part of the small subunit (SSU) processome, composed of more than 70 proteins and the RNA chaperone small nucleolar RNA (snoRNA) U3.

It localises to the cytoplasm. It is found in the nucleus. The protein localises to the nucleolus. Component of the small ribosomal subunit. Part of the small subunit (SSU) processome, first precursor of the small eukaryotic ribosomal subunit. During the assembly of the SSU processome in the nucleolus, many ribosome biogenesis factors, an RNA chaperone and ribosomal proteins associate with the nascent pre-rRNA and work in concert to generate RNA folding, modifications, rearrangements and cleavage as well as targeted degradation of pre-ribosomal RNA by the RNA exosome. Required for erythropoiesis during embryonic development. The polypeptide is Small ribosomal subunit protein uS8 (Danio rerio (Zebrafish)).